Reading from the N-terminus, the 343-residue chain is GTPase Obg (343 aa).

Residues methionine 1–leucine 159 enclose the Obg domain. Residues alanine 160–aspartate 328 enclose the OBG-type G domain. Residues glycine 166–serine 173, phenylalanine 191–valine 195, aspartate 213–glycine 216, asparagine 280–aspartate 283, and serine 309–alanine 311 contribute to the GTP site. Mg(2+)-binding residues include serine 173 and threonine 193.

Belongs to the TRAFAC class OBG-HflX-like GTPase superfamily. OBG GTPase family. As to quaternary structure, monomer. The cofactor is Mg(2+).

Its subcellular location is the cytoplasm. Functionally, an essential GTPase which binds GTP, GDP and possibly (p)ppGpp with moderate affinity, with high nucleotide exchange rates and a fairly low GTP hydrolysis rate. Plays a role in control of the cell cycle, stress response, ribosome biogenesis and in those bacteria that undergo differentiation, in morphogenesis control. The polypeptide is GTPase Obg (Synechococcus elongatus (strain ATCC 33912 / PCC 7942 / FACHB-805) (Anacystis nidulans R2)).